The sequence spans 127 residues: Small ribosomal subunit protein uS12 (127 aa).

Aspartate 89 is subject to 3-methylthioaspartic acid.

This sequence belongs to the universal ribosomal protein uS12 family. As to quaternary structure, part of the 30S ribosomal subunit. Contacts proteins S8 and S17. May interact with IF1 in the 30S initiation complex.

Its function is as follows. With S4 and S5 plays an important role in translational accuracy. Functionally, interacts with and stabilizes bases of the 16S rRNA that are involved in tRNA selection in the A site and with the mRNA backbone. Located at the interface of the 30S and 50S subunits, it traverses the body of the 30S subunit contacting proteins on the other side and probably holding the rRNA structure together. The combined cluster of proteins S8, S12 and S17 appears to hold together the shoulder and platform of the 30S subunit. The protein is Small ribosomal subunit protein uS12 of Campylobacter fetus subsp. fetus (strain 82-40).